We begin with the raw amino-acid sequence, 464 residues long: MIDMEVGIVGGGLAGLVAAISLVEKGVDVSIIGPKSKDSNSYLAQAGIAFPLVEGDSIRIHVLDTIRAGKYINDEEVVWNVISKSTEAYSFLVSHGVTFTGNELEGGHSHPRVFTIKSETGKHVIPILEKHARELGVNFVRGFVEEIGIKNGKLAGVFLNGELLKFDAVVVATGGFSGLYRFTAGVKENIGLLIGDLALKGVPLRDMEFVQFHPTGFIGRRTYLITEAVRGAGAKLVTGDGERFVNELETRDVVARAIYLKMLEGKGVFLDARGIEDFKDRFPYVYSVLKKEGIDPGKDLIPVTPVAHYTMGGISVDIFYRTRIRGLYAIGEAASNGFHGANRLASNSLLECVVSGLEVARTILREEPKRGANDAPYNFDELGDVDSIREIMWNHAGIVRDKSSLLEGLKKLEGVEADQRLKVVAKAVLTLALEREESRGSHYRRDFPFMRKEFERPSFFHLNV.

Residues 11 to 14 and 40 to 47 each bind FAD; these read GGLA and NSYLAQAG. The active-site Proton donor/acceptor is the arginine 251. Residues glutamate 332 and 348–349 contribute to the FAD site; that span reads SL.

The protein belongs to the FAD-dependent oxidoreductase 2 family. NadB subfamily. Requires FAD as cofactor.

It is found in the cytoplasm. The catalysed reaction is L-aspartate + O2 = iminosuccinate + H2O2. Its pathway is cofactor biosynthesis; NAD(+) biosynthesis; iminoaspartate from L-aspartate (oxidase route): step 1/1. Catalyzes the oxidation of L-aspartate to iminoaspartate, the first step in the de novo biosynthesis of NAD(+). This chain is L-aspartate oxidase (nadB), found in Pyrococcus abyssi (strain GE5 / Orsay).